Consider the following 356-residue polypeptide: Chorismate synthase (356 aa).

Positions 44 and 49 each coordinate NADP(+). FMN-binding positions include 121 to 123, Gly-278, 293 to 297, and Arg-320; these read HFS and KPTPS.

This sequence belongs to the chorismate synthase family. FMNH2 serves as cofactor.

The enzyme catalyses 5-O-(1-carboxyvinyl)-3-phosphoshikimate = chorismate + phosphate. Its pathway is metabolic intermediate biosynthesis; chorismate biosynthesis; chorismate from D-erythrose 4-phosphate and phosphoenolpyruvate: step 7/7. Functionally, catalyzes the anti-1,4-elimination of the C-3 phosphate and the C-6 proR hydrogen from 5-enolpyruvylshikimate-3-phosphate (EPSP) to yield chorismate, which is the branch point compound that serves as the starting substrate for the three terminal pathways of aromatic amino acid biosynthesis. This reaction introduces a second double bond into the aromatic ring system. The chain is Chorismate synthase from Thermococcus gammatolerans (strain DSM 15229 / JCM 11827 / EJ3).